We begin with the raw amino-acid sequence, 244 residues long: Type III pantothenate kinase (244 aa).

ATP is bound at residue aspartate 9–lysine 16. Substrate contacts are provided by residues tyrosine 90 and glycine 97–arginine 100. Aspartate 99 serves as the catalytic Proton acceptor. Threonine 122 serves as a coordination point for ATP. Threonine 172 serves as a coordination point for substrate.

Belongs to the type III pantothenate kinase family. In terms of assembly, homodimer. NH4(+) serves as cofactor. K(+) is required as a cofactor.

It localises to the cytoplasm. The catalysed reaction is (R)-pantothenate + ATP = (R)-4'-phosphopantothenate + ADP + H(+). The protein operates within cofactor biosynthesis; coenzyme A biosynthesis; CoA from (R)-pantothenate: step 1/5. Its function is as follows. Catalyzes the phosphorylation of pantothenate (Pan), the first step in CoA biosynthesis. The polypeptide is Type III pantothenate kinase (Thiobacillus denitrificans (strain ATCC 25259 / T1)).